The following is a 421-amino-acid chain: FAD-dependent monooxygenase atnJ (421 aa).

A helical transmembrane segment spans residues 9 to 29; that stretch reads LVPLHVVIVGAGIGGLSAAVA. Residues glutamate 41 and alanine 54 each coordinate FAD. Arginine 188 is an active-site residue. Residues aspartate 303 and valine 316 each coordinate FAD. The tract at residues 371-392 is disordered; sequence RDGDAQAARDSQRKATSGTGQN.

It belongs to the paxM FAD-dependent monooxygenase family. The cofactor is FAD.

Its subcellular location is the membrane. It functions in the pathway secondary metabolite biosynthesis; terpenoid biosynthesis. In terms of biological role, FAD-dependent monooxygenase; part of the gene cluster that mediates the biosynthesis of the meroterpenoids arthripenoids. The pathway begins with the HR-PKS atnH that catalyzes two chain-extension steps to form a reduced triketide, which then primes the SAT domain in the NR-PKS atnG to initiate three more cycles of extension to give a linear hexaketide corresponding to the polyketide part of arthripenoids. The FAD-dependent monooxygenase atnJ then performs an oxidative decarboxylation at C11 of the atnH/atnG product, via an electrophilic aromatic hydroxylation with concomitant ipso-decarboxylation. The membrane-bound polyprenyl transferase atnF then introduces a farnesyl group before the FAD-dependent monooxygenase atnK functions as the first epoxidase on terminal C12'-C13' olefin, followed by a second epoxidation on C7'-C8' catalyzed by atnA. The terpene cyclase/mutase atnI then initiates the sequential tricyclic ring formation through protonation of the terminal epoxide and catalyzes the regioselective and stereoselective 6/6/6-tricyclic ring formation. The cytochrome P450 monooxygenase atnM is responsible for hydroxylating both C1' and C10'. The next steps may involve ketoreduction and acetyl transfer by the ketoreductase atnB and the acetyltransferase atnC, and lead to the production of arthripenoid B, the final biosynthetic product of the atn cluster. The hydroquinone moiety in arthripenoid B is prone to undergo spontaneous oxidation to afford a benzoquinone compound, a key intermediate for generating structure diversity. For instance, addition of a cysteine followed by ring contraction gives arthripenoid A, tautomerization gives the main product arthripenoid C, addition of a molecular of water or amine affords arthripenoid D or E, respectively, and loss of one water forms arthripenoid F. This chain is FAD-dependent monooxygenase atnJ, found in Arthrinium sp.